The chain runs to 646 residues: uncharacterized protein (646 aa).

The next 10 membrane-spanning stretches (helical) occupy residues 20 to 40, 54 to 74, 115 to 135, 154 to 174, 203 to 223, 232 to 252, 285 to 305, 523 to 543, 582 to 602, and 613 to 633; these read AYFLSCVFAVSVFFVFTSFIF, LVKTCLSAALVVIIVFCIFFI, LAAIAAGIGAGLLFSKLFFMI, AFVMTIAGFLILFQTLLILSL, TVLSLLCLGSGYYLSATANAI, ILILVLIGTYFFFTQSSVAFF, LFLTSVITAVILTATGVIYMF, GVALMLFIGLFVSVLFFIVQG, IGFLFFIPFIAGTIHAGFAYA, and FLEAVIVIFIYFVFQALYYIV.

It belongs to the ABC-4 integral membrane protein family.

It is found in the cell membrane. This is an uncharacterized protein from Bacillus subtilis (strain 168).